The primary structure comprises 387 residues: Signal-regulatory protein gamma (387 aa).

The signal sequence occupies residues 1–28; the sequence is MPVPASWPHPPGPFLLLTLLLGLTEVAG. Residues 29–137 enclose the Ig-like V-type domain; sequence EEELQMIQPE…ENVEFKSGPG (109 aa). Residues 29-360 are Extracellular-facing; that stretch reads EEELQMIQPE…QKDQSSDATP (332 aa). Intrachain disulfides connect Cys-53/Cys-119 and Cys-168/Cys-226. 2 consecutive Ig-like C1-type domains span residues 146 to 245 and 252 to 340; these read PSAP…ANLS and PTLE…LAVS. Asn-243, Asn-268, Asn-309, and Asn-317 each carry an N-linked (GlcNAc...) asparagine glycan. The cysteines at positions 271 and 329 are disulfide-linked. Residues 361 to 383 form a helical membrane-spanning segment; that stretch reads GPASSLTALLLIAVLLGPIYVPW. Residues 384–387 are Cytoplasmic-facing; that stretch reads KQKT.

As to quaternary structure, interacts with CD47. In terms of tissue distribution, detected in liver, and at very low levels in brain, heart, lung, pancreas, kidney, placenta and skeletal muscle. Expressed on CD4+ T-cells, CD8+ T-cells, CD56-bright natural killer (NK) cells, CD20+ cells, and all activated NK cells. Mainly present in the paracortical T-cell area of lymph nodes, with only sparse positive cells in the mantle and in the germinal center of B-cell follicles. In the thymus, primarily expressed in the medulla on mature T-lymphocytes that have undergone thymic selection.

Its subcellular location is the membrane. Its function is as follows. Probable immunoglobulin-like cell surface receptor. On binding with CD47, mediates cell-cell adhesion. Engagement on T-cells by CD47 on antigen-presenting cells results in enhanced antigen-specific T-cell proliferation and costimulates T-cell activation. This chain is Signal-regulatory protein gamma (SIRPG), found in Homo sapiens (Human).